Here is a 245-residue protein sequence, read N- to C-terminus: Phycocyanobilin:ferredoxin oxidoreductase (245 aa).

The protein belongs to the HY2 family.

It carries out the reaction (2R,3Z)-phycocyanobilin + 4 oxidized [2Fe-2S]-[ferredoxin] = biliverdin IXalpha + 4 reduced [2Fe-2S]-[ferredoxin] + 4 H(+). In terms of biological role, catalyzes the four-electron reduction of biliverdin IX-alpha (2-electron reduction at both the A and D rings); the reaction proceeds via an isolatable 2-electron intermediate, 181,182-dihydrobiliverdin. In Rippkaea orientalis (strain PCC 8801 / RF-1) (Cyanothece sp. (strain PCC 8801)), this protein is Phycocyanobilin:ferredoxin oxidoreductase.